The sequence spans 534 residues: CTP synthase (534 aa).

The amidoligase domain stretch occupies residues 1–267 (MTKYIFVTGG…DQIVCDHLKL (267 aa)). Residue Ser13 coordinates CTP. A UTP-binding site is contributed by Ser13. 14-19 (SIGKGI) lines the ATP pocket. Tyr54 contributes to the L-glutamine binding site. Asp71 contributes to the ATP binding site. Mg(2+)-binding residues include Asp71 and Glu141. CTP-binding positions include 148–150 (DIE), 188–193 (KTKPTQ), and Lys224. Residues 188–193 (KTKPTQ) and Lys224 contribute to the UTP site. The Glutamine amidotransferase type-1 domain maps to 292–534 (KIALVGKYVE…FVTAAVENMK (243 aa)). Gly354 is an L-glutamine binding site. Cys381 acts as the Nucleophile; for glutamine hydrolysis in catalysis. Residues 382-385 (LGMQ), Glu405, and Arg463 each bind L-glutamine. Residues His508 and Glu510 contribute to the active site.

This sequence belongs to the CTP synthase family. As to quaternary structure, homotetramer.

It catalyses the reaction UTP + L-glutamine + ATP + H2O = CTP + L-glutamate + ADP + phosphate + 2 H(+). It carries out the reaction L-glutamine + H2O = L-glutamate + NH4(+). The enzyme catalyses UTP + NH4(+) + ATP = CTP + ADP + phosphate + 2 H(+). It participates in pyrimidine metabolism; CTP biosynthesis via de novo pathway; CTP from UDP: step 2/2. Allosterically activated by GTP, when glutamine is the substrate; GTP has no effect on the reaction when ammonia is the substrate. The allosteric effector GTP functions by stabilizing the protein conformation that binds the tetrahedral intermediate(s) formed during glutamine hydrolysis. Inhibited by the product CTP, via allosteric rather than competitive inhibition. Functionally, catalyzes the ATP-dependent amination of UTP to CTP with either L-glutamine or ammonia as the source of nitrogen. Regulates intracellular CTP levels through interactions with the four ribonucleotide triphosphates. This is CTP synthase from Streptococcus agalactiae serotype V (strain ATCC BAA-611 / 2603 V/R).